We begin with the raw amino-acid sequence, 338 residues long: Nuclear hormone receptor family member nhr-108 (338 aa).

The nuclear receptor DNA-binding region spans 7 to 82 (NQPCMVCGEI…IGMLEKVVAS (76 aa)). The segment at 10–30 (CMVCGEISYSIRFGAVSCRAC) adopts an NR C4-type zinc-finger fold. The segment at 46–65 (KRCNGACDLGKYHRKTCQSC) adopts an NR C4-type; degenerate zinc-finger fold. An NR LBD domain is found at 92 to 338 (NNQTILSGLE…QCPLYEATNE (247 aa)).

The protein belongs to the nuclear hormone receptor family.

It localises to the nucleus. Functionally, orphan nuclear receptor. The chain is Nuclear hormone receptor family member nhr-108 (nhr-108) from Caenorhabditis elegans.